A 258-amino-acid polypeptide reads, in one-letter code: uncharacterized protein (258 aa).

6 consecutive transmembrane segments (helical) span residues 24–44 (IPLF…VNIF), 70–90 (PLVH…FLLM), 100–120 (LCTI…AYLI), 130–150 (VYVG…LNLF), 157–177 (LLNL…VLGL), and 181–201 (FSIT…FSFA). H188 is an active-site residue.

This sequence belongs to the peptidase S54 family.

The protein localises to the golgi apparatus membrane. This is an uncharacterized protein from Schizosaccharomyces pombe (strain 972 / ATCC 24843) (Fission yeast).